Here is a 283-residue protein sequence, read N- to C-terminus: Protein/nucleic acid deglycase HchA (283 aa).

His-86, Glu-91, and His-123 together coordinate Zn(2+). Residue Cys-185 is the Nucleophile of the active site.

This sequence belongs to the peptidase C56 family. HchA subfamily. As to quaternary structure, homodimer.

It localises to the cytoplasm. The enzyme catalyses N(omega)-(1-hydroxy-2-oxopropyl)-L-arginyl-[protein] + H2O = lactate + L-arginyl-[protein] + H(+). It carries out the reaction N(6)-(1-hydroxy-2-oxopropyl)-L-lysyl-[protein] + H2O = lactate + L-lysyl-[protein] + H(+). It catalyses the reaction S-(1-hydroxy-2-oxopropyl)-L-cysteinyl-[protein] + H2O = lactate + L-cysteinyl-[protein] + H(+). The catalysed reaction is N(omega)-(1-hydroxy-2-oxoethyl)-L-arginyl-[protein] + H2O = L-arginyl-[protein] + glycolate + H(+). The enzyme catalyses N(6)-(1-hydroxy-2-oxoethyl)-L-lysyl-[protein] + H2O = glycolate + L-lysyl-[protein] + H(+). It carries out the reaction S-(1-hydroxy-2-oxoethyl)-L-cysteinyl-[protein] + H2O = glycolate + L-cysteinyl-[protein] + H(+). It catalyses the reaction N(2)-(1-hydroxy-2-oxopropyl)-dGTP + H2O = lactate + dGTP + H(+). The catalysed reaction is N(2)-(1-hydroxy-2-oxopropyl)-GTP + H2O = lactate + GTP + H(+). The enzyme catalyses N(2)-(1-hydroxy-2-oxopropyl)-GDP + H2O = lactate + GDP + H(+). It carries out the reaction N(2)-(1-hydroxy-2-oxopropyl)-GMP + H2O = lactate + GMP + H(+). It catalyses the reaction N(2)-(1-hydroxy-2-oxoethyl)-dGTP + H2O = dGTP + glycolate + H(+). The catalysed reaction is N(2)-(1-hydroxy-2-oxoethyl)-GTP + H2O = glycolate + GTP + H(+). The enzyme catalyses N(2)-(1-hydroxy-2-oxoethyl)-GDP + H2O = glycolate + GDP + H(+). It carries out the reaction N(2)-(1-hydroxy-2-oxoethyl)-GMP + H2O = glycolate + GMP + H(+). It catalyses the reaction an N(2)-(1-hydroxy-2-oxopropyl)-guanosine in RNA + H2O = a guanosine in RNA + lactate + H(+). The catalysed reaction is an N(2)-(1-hydroxy-2-oxopropyl)-2'-deoxyguanosine in DNA + H2O = a 2'-deoxyguanosine in DNA + lactate + H(+). The enzyme catalyses an N(2)-(1-hydroxy-2-oxoethyl)-guanosine in RNA + H2O = a guanosine in RNA + glycolate + H(+). It carries out the reaction an N(2)-(1-hydroxy-2-oxoethyl)-2'-deoxyguanosine in DNA + H2O = a 2'-deoxyguanosine in DNA + glycolate + H(+). Protein and nucleotide deglycase that catalyzes the deglycation of the Maillard adducts formed between amino groups of proteins or nucleotides and reactive carbonyl groups of glyoxals. Thus, functions as a protein deglycase that repairs methylglyoxal- and glyoxal-glycated proteins, and releases repaired proteins and lactate or glycolate, respectively. Deglycates cysteine, arginine and lysine residues in proteins, and thus reactivates these proteins by reversing glycation by glyoxals. Acts on early glycation intermediates (hemithioacetals and aminocarbinols), preventing the formation of Schiff bases and advanced glycation endproducts (AGE). Also functions as a nucleotide deglycase able to repair glycated guanine in the free nucleotide pool (GTP, GDP, GMP, dGTP) and in DNA and RNA. Is thus involved in a major nucleotide repair system named guanine glycation repair (GG repair), dedicated to reversing methylglyoxal and glyoxal damage via nucleotide sanitization and direct nucleic acid repair. Plays an important role in protecting cells from carbonyl stress. This is Protein/nucleic acid deglycase HchA from Escherichia coli O7:K1 (strain IAI39 / ExPEC).